A 394-amino-acid polypeptide reads, in one-letter code: Phosphoglycerate kinase (394 aa).

Residues 21-23, arginine 36, 59-62, arginine 118, and arginine 151 contribute to the substrate site; these read DFN and HLGR. Position 183 is a phosphoserine (serine 183). Position 201 (lysine 201) interacts with ATP. Threonine 299 carries the post-translational modification Phosphothreonine. ATP contacts are provided by residues asparagine 316, glutamate 323, and 350 to 353; that span reads GGDS.

Belongs to the phosphoglycerate kinase family. As to quaternary structure, monomer.

The protein resides in the cytoplasm. The enzyme catalyses (2R)-3-phosphoglycerate + ATP = (2R)-3-phospho-glyceroyl phosphate + ADP. It participates in carbohydrate degradation; glycolysis; pyruvate from D-glyceraldehyde 3-phosphate: step 2/5. This chain is Phosphoglycerate kinase, found in Geobacillus stearothermophilus (Bacillus stearothermophilus).